Reading from the N-terminus, the 416-residue chain is MTNYAIILAAGKGTRMTSDLPKVLHKVSGLTMLEHVFRSVKAISPEKAVTVIGHKSEKVRAVLADQSAFVHQTEQLGTGHAVMMAETQLEGLEGHTLVIAGDTPLITGESLKSLIDFHVNHKNVATILTATAQDPFGYGRIVRNKDGEVIKIVEQKDANEYEQQLKEINTGTYVFDNKRLFEALKCITTNNAQGEYYLTDVVAIFRANKEKVGAYILRDFNESLGVNDRVALATAETVMRQRITQKHMVNGVTFQNPETVYIESDVEIAPDVLIEGNVTLKGRTHIGSGTVLTNGTYIVDSEIGQGSIITNSMIESSVLAAGVTVGPYAHLRPGTTLGREVHIGNFVEVKGSHIGEKTKAGHLTYIGNAQVGSSVNVGAGTITVNYDGQNKYETVIGDHAFIWEQLDSHCTFGSWR.

The interval 1-229 (MTNYAIILAA…FNESLGVNDR (229 aa)) is pyrophosphorylase. UDP-N-acetyl-alpha-D-glucosamine contacts are provided by residues 8 to 11 (LAAG), Lys22, Gln72, and 77 to 78 (GT). Asp102 lines the Mg(2+) pocket. 4 residues coordinate UDP-N-acetyl-alpha-D-glucosamine: Gly139, Glu154, Asn169, and Asn227. Asn227 contacts Mg(2+). The segment at 230-250 (VALATAETVMRQRITQKHMVN) is linker. Residues 251-416 (GVTFQNPETV…DSHCTFGSWR (166 aa)) form an N-acetyltransferase region. Positions 332 and 350 each coordinate UDP-N-acetyl-alpha-D-glucosamine. His362 (proton acceptor) is an active-site residue. The UDP-N-acetyl-alpha-D-glucosamine site is built by Tyr365 and Asn376. Acetyl-CoA contacts are provided by residues Ala379 and 385–386 (NY).

It in the N-terminal section; belongs to the N-acetylglucosamine-1-phosphate uridyltransferase family. The protein in the C-terminal section; belongs to the transferase hexapeptide repeat family. In terms of assembly, homotrimer. Mg(2+) serves as cofactor.

It localises to the cytoplasm. It carries out the reaction alpha-D-glucosamine 1-phosphate + acetyl-CoA = N-acetyl-alpha-D-glucosamine 1-phosphate + CoA + H(+). The enzyme catalyses N-acetyl-alpha-D-glucosamine 1-phosphate + UTP + H(+) = UDP-N-acetyl-alpha-D-glucosamine + diphosphate. The protein operates within nucleotide-sugar biosynthesis; UDP-N-acetyl-alpha-D-glucosamine biosynthesis; N-acetyl-alpha-D-glucosamine 1-phosphate from alpha-D-glucosamine 6-phosphate (route II): step 2/2. It functions in the pathway nucleotide-sugar biosynthesis; UDP-N-acetyl-alpha-D-glucosamine biosynthesis; UDP-N-acetyl-alpha-D-glucosamine from N-acetyl-alpha-D-glucosamine 1-phosphate: step 1/1. Its pathway is bacterial outer membrane biogenesis; LPS lipid A biosynthesis. Functionally, catalyzes the last two sequential reactions in the de novo biosynthetic pathway for UDP-N-acetylglucosamine (UDP-GlcNAc). The C-terminal domain catalyzes the transfer of acetyl group from acetyl coenzyme A to glucosamine-1-phosphate (GlcN-1-P) to produce N-acetylglucosamine-1-phosphate (GlcNAc-1-P), which is converted into UDP-GlcNAc by the transfer of uridine 5-monophosphate (from uridine 5-triphosphate), a reaction catalyzed by the N-terminal domain. The sequence is that of Bifunctional protein GlmU from Streptococcus pyogenes serotype M12 (strain MGAS2096).